The sequence spans 233 residues: MKYKRVLLKLSGEFLTRNGFGIEPEATQALAREIKAAYDTGVQLAIVIGAGNLWRGARQGVGMDRATADYIGMLATIMNALALQDALESLGVPTRVQTALTITQVAEPYIRRRALRHLEKERIVIFGGGTGNPFFSTDTAAALRALEVGAEVVLMAKNKVDGVYSDDPRKNPEAVRFDELTYLEVLNRGLQVMDTTAITLCMEAGLPIVVFDIFKPGALVGIIQGEKVGTLIH.

ATP contacts are provided by residues 9–12 (KLSG), Gly-51, and Arg-55. Residues Asp-69 and 130 to 137 (TGNPFFST) contribute to the UMP site. Positions 158, 164, and 167 each coordinate ATP.

Belongs to the UMP kinase family. As to quaternary structure, homohexamer.

It localises to the cytoplasm. The catalysed reaction is UMP + ATP = UDP + ADP. It participates in pyrimidine metabolism; CTP biosynthesis via de novo pathway; UDP from UMP (UMPK route): step 1/1. Its activity is regulated as follows. Inhibited by UTP. Catalyzes the reversible phosphorylation of UMP to UDP. The sequence is that of Uridylate kinase from Thermus thermophilus (strain ATCC BAA-163 / DSM 7039 / HB27).